Consider the following 112-residue polypeptide: Large ribosomal subunit protein uL1 (112 aa).

It belongs to the universal ribosomal protein uL1 family.

The sequence is that of Large ribosomal subunit protein uL1 (rpl-10a) from Caenorhabditis remanei (Caenorhabditis vulgaris).